A 506-amino-acid polypeptide reads, in one-letter code: RNA-splicing ligase RtcB homolog 1 (506 aa).

The Mn(2+) site is built by Asp120, Cys123, His228, His260, and His354. 227 to 231 (NHYAE) serves as a coordination point for GMP. GMP is bound by residues 354 to 355 (HN), 403 to 406 (GGSM), Ser410, 429 to 432 (HGAG), and Lys505. The active-site GMP-histidine intermediate is the His429.

The protein belongs to the RtcB family. In terms of assembly, catalytic component of the tRNA-splicing ligase complex. Mn(2+) serves as cofactor.

It carries out the reaction a 3'-end 3'-phospho-ribonucleotide-RNA + a 5'-end dephospho-ribonucleoside-RNA + GTP = a ribonucleotidyl-ribonucleotide-RNA + GMP + diphosphate. The catalysed reaction is a 3'-end 2',3'-cyclophospho-ribonucleotide-RNA + a 5'-end dephospho-ribonucleoside-RNA + GTP + H2O = a ribonucleotidyl-ribonucleotide-RNA + GMP + diphosphate + H(+). Its function is as follows. Catalytic subunit of the tRNA-splicing ligase complex that acts by directly joining spliced tRNA halves to mature-sized tRNAs by incorporating the precursor-derived splice junction phosphate into the mature tRNA as a canonical 3',5'-phosphodiester. May act as an RNA ligase with broad substrate specificity, and may function toward other RNAs. This chain is RNA-splicing ligase RtcB homolog 1, found in Culex quinquefasciatus (Southern house mosquito).